Here is a 154-residue protein sequence, read N- to C-terminus: D-aminoacyl-tRNA deacylase (154 aa).

A Gly-cisPro motif, important for rejection of L-amino acids motif is present at residues 138–139 (GP).

Belongs to the DTD family. In terms of assembly, homodimer.

The protein resides in the cytoplasm. It catalyses the reaction glycyl-tRNA(Ala) + H2O = tRNA(Ala) + glycine + H(+). The enzyme catalyses a D-aminoacyl-tRNA + H2O = a tRNA + a D-alpha-amino acid + H(+). Its function is as follows. An aminoacyl-tRNA editing enzyme that deacylates mischarged D-aminoacyl-tRNAs. Also deacylates mischarged glycyl-tRNA(Ala), protecting cells against glycine mischarging by AlaRS. Acts via tRNA-based rather than protein-based catalysis; rejects L-amino acids rather than detecting D-amino acids in the active site. By recycling D-aminoacyl-tRNA to D-amino acids and free tRNA molecules, this enzyme counteracts the toxicity associated with the formation of D-aminoacyl-tRNA entities in vivo and helps enforce protein L-homochirality. In Halorhodospira halophila (strain DSM 244 / SL1) (Ectothiorhodospira halophila (strain DSM 244 / SL1)), this protein is D-aminoacyl-tRNA deacylase.